Reading from the N-terminus, the 383-residue chain is Lipid-A-disaccharide synthase (383 aa).

Belongs to the LpxB family.

The enzyme catalyses a lipid X + a UDP-2-N,3-O-bis[(3R)-3-hydroxyacyl]-alpha-D-glucosamine = a lipid A disaccharide + UDP + H(+). The protein operates within bacterial outer membrane biogenesis; LPS lipid A biosynthesis. In terms of biological role, condensation of UDP-2,3-diacylglucosamine and 2,3-diacylglucosamine-1-phosphate to form lipid A disaccharide, a precursor of lipid A, a phosphorylated glycolipid that anchors the lipopolysaccharide to the outer membrane of the cell. The polypeptide is Lipid-A-disaccharide synthase (Myxococcus xanthus (strain DK1622)).